We begin with the raw amino-acid sequence, 443 residues long: Amino-acid acetyltransferase (443 aa).

In terms of domain architecture, N-acetyltransferase spans 296–443 (EQIRRATIND…KSKVLMADLG (148 aa)).

Belongs to the acetyltransferase family. ArgA subfamily. In terms of assembly, homohexamer.

It is found in the cytoplasm. It carries out the reaction L-glutamate + acetyl-CoA = N-acetyl-L-glutamate + CoA + H(+). Its pathway is amino-acid biosynthesis; L-arginine biosynthesis; N(2)-acetyl-L-ornithine from L-glutamate: step 1/4. This is Amino-acid acetyltransferase (argA) from Escherichia coli O157:H7.